The sequence spans 122 residues: Large ribosomal subunit protein uL14 (122 aa).

The protein belongs to the universal ribosomal protein uL14 family. Part of the 50S ribosomal subunit. Forms a cluster with proteins L3 and L19. In the 70S ribosome, L14 and L19 interact and together make contacts with the 16S rRNA in bridges B5 and B8.

Binds to 23S rRNA. Forms part of two intersubunit bridges in the 70S ribosome. This Lactobacillus delbrueckii subsp. bulgaricus (strain ATCC 11842 / DSM 20081 / BCRC 10696 / JCM 1002 / NBRC 13953 / NCIMB 11778 / NCTC 12712 / WDCM 00102 / Lb 14) protein is Large ribosomal subunit protein uL14.